The sequence spans 208 residues: Large ribosomal subunit protein uL4 (208 aa).

The disordered stretch occupies residues 45–96; that stretch reads RQGTHKSKTRAEVRGGGRKPYRQKGTGNARQGSTRSPLMVGGGTIFGPTPHG. Residues 69 to 80 show a composition bias toward polar residues; it reads GTGNARQGSTRS.

This sequence belongs to the universal ribosomal protein uL4 family. As to quaternary structure, part of the 50S ribosomal subunit.

One of the primary rRNA binding proteins, this protein initially binds near the 5'-end of the 23S rRNA. It is important during the early stages of 50S assembly. It makes multiple contacts with different domains of the 23S rRNA in the assembled 50S subunit and ribosome. Its function is as follows. Forms part of the polypeptide exit tunnel. In Chlorobium phaeovibrioides (strain DSM 265 / 1930) (Prosthecochloris vibrioformis (strain DSM 265)), this protein is Large ribosomal subunit protein uL4.